The chain runs to 851 residues: Venom phosphodiesterase (851 aa).

An N-terminal signal peptide occupies residues 1–23 (MIQQKVLFISLVAVALGLGLGLG). SMB domains are found at residues 30 to 73 (PQVS…VLPT) and 74 to 118 (QSWS…GETS). Cystine bridges form between C34/C38, C34/C51, C38/C69, C49/C51, C49/C62, C55/C61, C62/C69, C78/C83, C78/C95, C83/C113, C93/C95, C93/C106, C99/C105, C106/C113, C124/C170, and C132/C344. N39 carries N-linked (GlcNAc...) asparagine glycosylation. The Cell attachment site motif lies at 58-60 (RQA). Residues D147 and T185 each contribute to the a divalent metal cation site. The AMP-threonine intermediate role is filled by T185. N-linked (GlcNAc...) asparagine glycosylation is found at N216, N259, and N270. Residue K271 participates in AMP binding. A divalent metal cation contacts are provided by D305, H309, D352, and H353. Position 309 (H309) interacts with AMP. 6 cysteine pairs are disulfide-bonded: C360–C457, C408–C793, C541–C599, C554–C654, C556–C639, and C762–C772. N405 carries an N-linked (GlcNAc...) asparagine glycan. H462 provides a ligand contact to a divalent metal cation. N512, N594, and N745 each carry an N-linked (GlcNAc...) asparagine glycan.

The protein belongs to the nucleotide pyrophosphatase/phosphodiesterase family. Monomer cleaved in two subunits; disulfide-linked. Is synthesized as a single-chain protein and is subsequently cleaved to form a two-subunit protein held together with disulfide bonds. Requires a divalent metal cation as cofactor. As to expression, expressed by venom gland.

The protein resides in the secreted. It carries out the reaction ADP + H2O = AMP + phosphate + H(+). Its function is as follows. Hydrolyzes ADP with high activity. Shows weak or no activity on 5'-AMP, 5'-GMP, 3'-AMP, ATP, cAMP, and cGMP. Is devoid of monophosphatase and proteinase activities. Dose-dependently inhibits platelet aggregation induced by ADP (IC(50)=0.99 uM) and collagen (IC(50)=1.4 uM). This Macrovipera lebetinus (Levantine viper) protein is Venom phosphodiesterase.